Reading from the N-terminus, the 449-residue chain is Trigger factor (449 aa).

The 86-residue stretch at 169-254 (GDRITVDFVG…AKQVEAPGEL (86 aa)) folds into the PPIase FKBP-type domain.

The protein belongs to the FKBP-type PPIase family. Tig subfamily.

It is found in the cytoplasm. The catalysed reaction is [protein]-peptidylproline (omega=180) = [protein]-peptidylproline (omega=0). Functionally, involved in protein export. Acts as a chaperone by maintaining the newly synthesized protein in an open conformation. Functions as a peptidyl-prolyl cis-trans isomerase. This Azorhizobium caulinodans (strain ATCC 43989 / DSM 5975 / JCM 20966 / LMG 6465 / NBRC 14845 / NCIMB 13405 / ORS 571) protein is Trigger factor.